Here is a 282-residue protein sequence, read N- to C-terminus: Pantothenate synthetase (282 aa).

ATP is bound at residue 30-37 (MGGLHQGH). Residue His37 is the Proton donor of the active site. Residue Gln61 participates in (R)-pantoate binding. Gln61 lines the beta-alanine pocket. Position 146–149 (146–149 (GQKD)) interacts with ATP. Gln152 is a binding site for (R)-pantoate. ATP is bound by residues Ile175 and 183–186 (MSTR).

The protein belongs to the pantothenate synthetase family. In terms of assembly, homodimer.

Its subcellular location is the cytoplasm. The catalysed reaction is (R)-pantoate + beta-alanine + ATP = (R)-pantothenate + AMP + diphosphate + H(+). It functions in the pathway cofactor biosynthesis; (R)-pantothenate biosynthesis; (R)-pantothenate from (R)-pantoate and beta-alanine: step 1/1. Its function is as follows. Catalyzes the condensation of pantoate with beta-alanine in an ATP-dependent reaction via a pantoyl-adenylate intermediate. This is Pantothenate synthetase from Vesicomyosocius okutanii subsp. Calyptogena okutanii (strain HA).